The sequence spans 293 residues: AKT-interacting protein homolog A (293 aa).

Residues 1-11 (MNPFWNMSSAS) are compositionally biased toward polar residues. Positions 1 to 45 (MNPFWNMSSASVRKRSENDEKISTGDQKISPPRSSSAKKQLPPIP) are disordered. Residues 14–23 (KRSENDEKIS) show a composition bias toward basic and acidic residues. Residues 24–38 (TGDQKISPPRSSSAK) show a composition bias toward polar residues. The UBC core domain maps to 75-223 (YLEYSLLAEF…VVDSVKLCNS (149 aa)). Residues 256-266 (AQKKKSEEQSK) show a composition bias toward basic and acidic residues. The interval 256-293 (AQKKKSEEQSKGLHVSGLSWVKPGSVLPFSKEENSLQT) is disordered.

The protein belongs to the ubiquitin-conjugating enzyme family. FTS subfamily.

The protein resides in the cytoplasm. It localises to the cell membrane. In terms of biological role, may function to promote vesicle trafficking and/or fusion. May also regulate apoptosis. The protein is AKT-interacting protein homolog A (aktip-a) of Xenopus laevis (African clawed frog).